A 796-amino-acid polypeptide reads, in one-letter code: Peroxisome proliferator-activated receptor gamma coactivator 1-alpha (796 aa).

The residue at position 77 (lysine 77) is an N6-acetyllysine. The tract at residues 98–138 is disordered; that stretch reads PVDEDGLPSFDALTDGDVTTDNEASPSSMPDGTPPPQEAEE. Polar residues predominate over residues 114–127; sequence DVTTDNEASPSSMP. The LXXLL motif signature appears at 142-146; it reads LKKLL. Lysine 144 carries the N6-acetyllysine modification. The residue at position 176 (threonine 176) is a Phosphothreonine; by AMPK. Position 182 is an N6-acetyllysine (lysine 182). Residues 211 to 275 form a disordered region; the sequence is YLTTNDDPPH…NDPKGSPFEN (65 aa). The segment covering 217 to 235 has biased composition (basic and acidic residues); that stretch reads DPPHTKPTENRNSSRDKCA. A compositionally biased stretch (polar residues) spans 242 to 258; sequence TQPQSQHAQAKPTTLSL. N6-acetyllysine is present on residues lysine 252, lysine 269, lysine 276, lysine 319, lysine 345, lysine 411, lysine 440, and lysine 449. The tract at residues 288-350 is disordered; it reads GTAGLTPPTT…HSTKKGPEQS (63 aa). Residues 291-337 form an interaction with PPARG region; the sequence is GLTPPTTPPHKANQDNPFKASPKLKPSCKTVVPPPTKRARYSECSGT. The tract at residues 348–796 is mediates interaction with RNF34; sequence EQSELYAQLS…LKEAQRSLRR (449 aa). Serine 537 is subject to Phosphoserine; by AMPK. Disordered stretches follow at residues 541–597 and 611–669; these read FNSP…SSRS and HRNS…QKQK. Over residues 561-576 the composition is skewed to basic residues; the sequence is QRMRSRSRSFSRHRSC. Positions 577 to 597 are enriched in low complexity; it reads SRSPYSRSRSRSPGSRSSSRS. The span at 620 to 629 shows a compositional bias: basic residues; that stretch reads SRSRSPYSRR. A compositionally biased stretch (basic and acidic residues) spans 630–669; that stretch reads PRYDSYEANEHERLKRDEYRREYEKRESERAKQRERQKQK. The RRM domain occupies 675–751; that stretch reads RVIYVGKIRP…TDFELYFCGR (77 aa). N6-acetyllysine occurs at positions 756 and 777.

In terms of assembly, homooligomer. Interacts with MYBBP1A; inhibits MYBBP1A transcriptional activation. Interacts with PRDM16, LPIN1 and PML. Interacts (via LXXLL motif) with RORA and RORC (via AF-2 motif); activates RORA and RORC transcriptional activation. Interacts with LRPPRC. Interacts with FOXO1. Interacts with NR5A2. In terms of processing, phosphorylation by AMPK in skeletal muscle increases activation of its own promoter. Phosphorylated by CLK2. Post-translationally, heavily acetylated by KAT2A/GCN5 under conditions of high nutrients, leading to inactivation of PPARGC1A. Deacetylated by SIRT1 in low nutrients/high NAD conditions, leading to its activation. Ubiquitinated. Ubiquitination by RNF34 induces proteasomal degradation.

The protein resides in the nucleus. The protein localises to the PML body. Transcriptional coactivator for steroid receptors and nuclear receptors. Greatly increases the transcriptional activity of PPARG and thyroid hormone receptor on the uncoupling protein promoter. Can regulate key mitochondrial genes that contribute to the program of adaptive thermogenesis. Plays an essential role in metabolic reprogramming in response to dietary availability through coordination of the expression of a wide array of genes involved in glucose and fatty acid metabolism. Acts as a key regulator of gluconeogenesis: stimulates hepatic gluconeogenesis by increasing the expression of gluconeogenic enzymes, and acting together with FOXO1 to promote the fasting gluconeogenic program. Induces the expression of PERM1 in the skeletal muscle in an ESRRA-dependent manner. Also involved in the integration of the circadian rhythms and energy metabolism. Required for oscillatory expression of clock genes, such as BMAL1 and NR1D1, through the coactivation of RORA and RORC, and metabolic genes, such as PDK4 and PEPCK. This chain is Peroxisome proliferator-activated receptor gamma coactivator 1-alpha (Ppargc1a), found in Rattus norvegicus (Rat).